The chain runs to 476 residues: Protein transport protein Sec61 subunit alpha (476 aa).

Residues 2 to 33 (GIKFLEVIKPFCAVLPEIQKPERKIQFREKVL) lie on the Cytoplasmic side of the membrane. A helical transmembrane segment spans residues 34–53 (WTAITLFIFLVCCQIPLFGI). Residues 54–76 (MSSDSADPFYWMRVILASNRGTL) lie on the Lumenal side of the membrane. The helical transmembrane segment at 77-96 (MELGISPIVTSGLIMQLLAG) threads the bilayer. Residues 97–117 (AKIIGVGDTPKDRALFNGAQK) lie on the Cytoplasmic side of the membrane. Residues 118–138 (LFGMIITIGQAIVYVMTGMYG) traverse the membrane as a helical segment. At 139-144 (DPSEMG) the chain is on the lumenal side. A helical transmembrane segment spans residues 145–165 (AGICLLIIIQLFVAGLIVLLL). The Cytoplasmic portion of the chain corresponds to 166 to 172 (DELLQKG). Residues 173-193 (YGLGSGISLFIATNICETIVW) traverse the membrane as a helical segment. Residues 194-240 (KAFSPTTVNTGRGTEFEGAIIALFHLLATRTDKVRALREGFYRQNLP) lie on the Lumenal side of the membrane. Residues 241 to 261 (NLMNLIATVFVFAVVIYFQGF) traverse the membrane as a helical segment. Residues 262 to 288 (RVDLPIKSARYRGQYNTYPIKLFYTSN) lie on the Cytoplasmic side of the membrane. A helical transmembrane segment spans residues 289–309 (IPIILQSALVSNLYVISQMLS). Residues 310-354 (TRFSGNFLVNLLGTWSDATSGGPARAYPVAGLCYYLSPPESFGSV) are Lumenal-facing. A helical membrane pass occupies residues 355–375 (LDDPVHAGIYIVFMLGSCAFF). Topologically, residues 376–420 (SKTWIEVSGSSAKDVAKQLKEQQMVMRGHRETSMVHELNRYIPTA) are cytoplasmic. The chain crosses the membrane as a helical span at residues 421-441 (AAFGGLCIGGLSVMADFLGAI). The Lumenal segment spans residues 442 to 445 (GSGT). Residues 446–462 (GILLAVTIIYQYFEIFV) form a helical membrane-spanning segment. Residues 463-476 (KEQSEVGSMGALLF) are Cytoplasmic-facing.

Belongs to the SecY/SEC61-alpha family. The SEC61 channel-forming translocon complex consists of channel-forming core components SEC61A1, SEC61B and SEC61G and different auxiliary components such as SEC62 and SEC63. The SEC61 channel associates with the multi-pass translocon (MPT) complex.

The protein resides in the endoplasmic reticulum membrane. Functionally, component of SEC61 channel-forming translocon complex that mediates transport of signal peptide-containing precursor polypeptides across the endoplasmic reticulum (ER). Forms a ribosome receptor and a gated pore in the ER membrane, both functions required for cotranslational translocation of nascent polypeptides. May cooperate with auxiliary protein SEC62, SEC63 and HSPA5/BiP to enable post-translational transport of small presecretory proteins. The SEC61 channel is also involved in ER membrane insertion of transmembrane proteins: it mediates membrane insertion of the first few transmembrane segments of proteins, while insertion of subsequent transmembrane regions of multi-pass membrane proteins is mediated by the multi-pass translocon (MPT) complex. The sequence is that of Protein transport protein Sec61 subunit alpha (sec61a) from Hemitripterus americanus (Sea raven).